We begin with the raw amino-acid sequence, 67 residues long: Kappa-conotoxin-like 1 (67 aa).

A signal peptide spans 1–26; it reads MMFRLTSVSCFLLVIACLNLFQVVLT. Disulfide bonds link C29/C43, C36/C48, C42/C51, and C47/C55. I59 bears the Isoleucine amide mark. The propeptide occupies 63–67; sequence ATFQE.

Belongs to the conotoxin I2 superfamily. In terms of tissue distribution, expressed by the venom duct.

Its subcellular location is the secreted. Its function is as follows. Inhibits the vertebrate voltage-gated potassium channels Kv1.1/KCNA1 and Kv1.3/KCNA3. The sequence is that of Kappa-conotoxin-like 1 from Conus vexillum (Flag cone).